The primary structure comprises 884 residues: MALSPAAAGRTGRNNNNDAGLADPLLPAGGGGGGGKDKYWVPADEEEEICRGEDGGRPPAPPLLYRTFKVSGVLLHPYRLLTLVRLIAVVLFLAWRLKHRDSDAMWLWWISIAGDFWFGVTWLLNQASKLNPVKRVPDLSLLRRRFDDGGLPGIDVFINTVDPVDEPMLYTMNSILSILATDYPADRHAAYLSDDGASLAHYEGLIETARFAALWVPFCRKHRVEPRAPESYFAAKAAPYAGPALPEEFFGDRRLVRREYEEFKARLDALFTDIPQRSEASVGNANTKGAKATLMADGTPWPGTWTEPAENHKKGQHAGIVKVMLSHPGEEPQLGMPASSGHPLDFSAVDVRLPILVYIAREKRPGYDHQKKAGAMNAQLRVSALLSNAPFIFNFDGDHYINNSQAFRAALCFMLDCRHGDDTAFVQFPQRFDDVDPTDRYCNHNRVFFDATLLGLNGVQGPSYVGTGCMFRRVALYGADPPRWRPEDDDAKALGCPGRYGNSMPFINTIPAAASQERSIASPAAASLDETAAMAEVEEVMTCAYEDGTEWGDGVGWVYDIATEDVVTGFRLHRKGWRSMYCAMEPDAFRGTAPINLTERLYQILRWSGGSLEMFFSRNCPLLAGCRLRPMQRVAYANMTAYPVSALFMVVYDLLPVIWLSHHGEFHIQKPFSTYVAYLVAVIAMIEVIGLVEIKWAGLTLLDWWRNEQFYMIGATGVYLAAVLHIVLKRLLGLKGVRFKLTAKQLAGGARERFAELYDVHWSPLLAPTVVVMAVNVTAIGAAAGKAVVGGWTPAQVAGASAGLVFNVWVLVLLYPFALGIMGRWSKRPCALFALLVAACAAVAAGFVAVHAVLAAGSAAPSWLGWSRGATAILPSSWRLKRGF.

Residues 1 to 27 (MALSPAAAGRTGRNNNNDAGLADPLLP) show a composition bias toward low complexity. The interval 1–34 (MALSPAAAGRTGRNNNNDAGLADPLLPAGGGGGG) is disordered. The next 2 membrane-spanning stretches (helical) occupy residues 73-93 (VLLH…VLFL) and 104-124 (AMWL…TWLL). D195 is a catalytic residue. Substrate contacts are provided by D396 and D398. The active site involves D565. Transmembrane regions (helical) follow at residues 640–660 (TAYP…VIWL), 672–692 (FSTY…IGLV), 708–728 (EQFY…HIVL), 765–785 (LLAP…AAAG), 802–822 (AGLV…LGIM), and 830–850 (CALF…FVAV).

It belongs to the glycosyltransferase 2 family. Plant cellulose synthase-like F subfamily.

It is found in the golgi apparatus membrane. May catalyze both beta-1,3 and beta-1,4 glycosidic linkage on beta-D-glucan. Essential for (1,3;1,4)-beta-D-glucans synthesis in grasses and cereals (Poaceae). The mixed-linked glucans (which are not present in walls of dicotyledons or most other monocotyledonous plants) are particularly important constituents of the walls of the starchy endosperm and aleurone cells of cereal grains such as oats, wheat, rice and barley. They can account for up to 70% by weight of the wall. The sequence is that of Probable mixed-linked glucan synthase 9 (CSLF9) from Oryza sativa subsp. japonica (Rice).